A 170-amino-acid polypeptide reads, in one-letter code: Translocator protein 2 (170 aa).

5 consecutive transmembrane segments (helical) span residues Leu-3–Thr-23, Val-45–Trp-65, Leu-78–Phe-98, Gly-104–Trp-124, and Leu-130–Tyr-150.

It belongs to the TspO/BZRP family. As to quaternary structure, homotetramer. May also form homodimer. In terms of tissue distribution, expressed in erythrocytes (at protein level).

The protein localises to the endoplasmic reticulum membrane. Its subcellular location is the cell membrane. In terms of biological role, cholesterol-binding protein involved in the redistribution of cholesterol from lipid droplets to the endoplasmic reticulum. Required to meet cholesterol demands during erythropoietic differentiation. May play a role in transport processes at the plasma membrane of erythrocytes, including regulating VDAC-mediated ATP export, and import of the heme precursors protoporphyrin IX and 5-aminolevulinic acid. This Homo sapiens (Human) protein is Translocator protein 2 (TSPO2).